The primary structure comprises 507 residues: Alkyl hydroperoxide reductase subunit F (507 aa).

Position 207–222 (207–222) interacts with FAD; sequence DVLIVGGGPASGSAAI. A disulfide bond links C335 and C338. 347-361 contacts NAD(+); it reads DVAVIGGGNSGVEAA. 467–477 serves as a coordination point for FAD; the sequence is TNVPGIFAAGD.

The protein belongs to the class-II pyridine nucleotide-disulfide oxidoreductase family. Homodimer. It depends on FAD as a cofactor.

In terms of biological role, serves to protect the cell against DNA damage by alkyl hydroperoxides. It can use either NADH or NADPH as electron donor for direct reduction of redox dyes or of alkyl hydroperoxides when combined with the AhpC protein. This is Alkyl hydroperoxide reductase subunit F (ahpF) from Staphylococcus aureus (strain MSSA476).